A 605-amino-acid chain; its full sequence is uncharacterized protein (605 aa).

Residues 56-78 (ILWSSIAAACVILFAAYKTGAYF) traverse the membrane as a helical segment.

Its subcellular location is the cell membrane. This is an uncharacterized protein from Bacillus subtilis (strain 168).